The primary structure comprises 89 residues: Small ribosomal subunit protein uS14 (89 aa).

It belongs to the universal ribosomal protein uS14 family. In terms of assembly, part of the 30S ribosomal subunit. Contacts proteins S3 and S10.

Binds 16S rRNA, required for the assembly of 30S particles and may also be responsible for determining the conformation of the 16S rRNA at the A site. This chain is Small ribosomal subunit protein uS14, found in Flavobacterium psychrophilum (strain ATCC 49511 / DSM 21280 / CIP 103535 / JIP02/86).